The following is a 355-amino-acid chain: Peptide chain release factor 1 (355 aa).

Q233 is subject to N5-methylglutamine. The segment covering 280-293 (KRRQKEQERSDSRR) has biased composition (basic and acidic residues). The segment at 280-310 (KRRQKEQERSDSRRGQVGSGDRSERIRTYNF) is disordered.

Belongs to the prokaryotic/mitochondrial release factor family. Methylated by PrmC. Methylation increases the termination efficiency of RF1.

It is found in the cytoplasm. Peptide chain release factor 1 directs the termination of translation in response to the peptide chain termination codons UAG and UAA. The chain is Peptide chain release factor 1 (prfA) from Rickettsia prowazekii (strain Madrid E).